A 398-amino-acid polypeptide reads, in one-letter code: Glucose-1-phosphate adenylyltransferase (398 aa).

Alpha-D-glucose 1-phosphate contacts are provided by residues Tyr-100, Gly-165, 180 to 181, and Ser-191; that span reads EK.

This sequence belongs to the bacterial/plant glucose-1-phosphate adenylyltransferase family. Homotetramer.

The catalysed reaction is alpha-D-glucose 1-phosphate + ATP + H(+) = ADP-alpha-D-glucose + diphosphate. It functions in the pathway glycan biosynthesis; glycogen biosynthesis. Its function is as follows. Involved in the biosynthesis of ADP-glucose, a building block required for the elongation reactions to produce glycogen. Catalyzes the reaction between ATP and alpha-D-glucose 1-phosphate (G1P) to produce pyrophosphate and ADP-Glc. This Desulfitobacterium hafniense (strain Y51) protein is Glucose-1-phosphate adenylyltransferase.